A 186-amino-acid polypeptide reads, in one-letter code: MAVARAGVLGVQWLQRASWNVMPLGARTASHMTKDMFPGPYPRTPEERAAAAKKYNMRVEDYEPYPDDGMGYGDYPKLPDRSQHERDPWYSWDQPDLRLNWGEPMHWHLDMFNRNRVDTSPILVSWNVMCMQLFGFLAFMIFMCWVGEVYPVYQPVGPKQYPYNNLYLERGGDPSKEPERVVHYEI.

A mitochondrion-targeting transit peptide spans 1 to 28 (MAVARAGVLGVQWLQRASWNVMPLGART). Residues 133-153 (LFGFLAFMIFMCWVGEVYPVY) form a helical membrane-spanning segment.

The protein belongs to the complex I NDUFB8 subunit family. In terms of assembly, complex I is composed of 45 different subunits.

It localises to the mitochondrion inner membrane. Accessory subunit of the mitochondrial membrane respiratory chain NADH dehydrogenase (Complex I), that is believed not to be involved in catalysis. Complex I functions in the transfer of electrons from NADH to the respiratory chain. The immediate electron acceptor for the enzyme is believed to be ubiquinone. The sequence is that of NADH dehydrogenase [ubiquinone] 1 beta subcomplex subunit 8, mitochondrial (NDUFB8) from Pongo abelii (Sumatran orangutan).